The chain runs to 729 residues: Fatty acid oxidation complex subunit alpha (729 aa).

Residues 1–189 (MLYKGDTLYL…KIGLVDGVVK (189 aa)) are enoyl-CoA hydratase/isomerase. Aspartate 296 lines the substrate pocket. The 3-hydroxyacyl-CoA dehydrogenase stretch occupies residues 311-729 (ETPKQAAVLG…ARPVGDLKTA (419 aa)). Residues methionine 324, aspartate 343, 400 to 402 (VVE), lysine 407, and serine 429 contribute to the NAD(+) site. Histidine 450 acts as the For 3-hydroxyacyl-CoA dehydrogenase activity in catalysis. Asparagine 453 lines the NAD(+) pocket. Positions 500 and 660 each coordinate substrate. The segment at 708 to 729 (RHNEPYYPPVEPARPVGDLKTA) is disordered.

The protein in the N-terminal section; belongs to the enoyl-CoA hydratase/isomerase family. In the C-terminal section; belongs to the 3-hydroxyacyl-CoA dehydrogenase family. As to quaternary structure, heterotetramer of two alpha chains (FadB) and two beta chains (FadA).

It catalyses the reaction a (3S)-3-hydroxyacyl-CoA + NAD(+) = a 3-oxoacyl-CoA + NADH + H(+). The catalysed reaction is a (3S)-3-hydroxyacyl-CoA = a (2E)-enoyl-CoA + H2O. The enzyme catalyses a 4-saturated-(3S)-3-hydroxyacyl-CoA = a (3E)-enoyl-CoA + H2O. It carries out the reaction (3S)-3-hydroxybutanoyl-CoA = (3R)-3-hydroxybutanoyl-CoA. It catalyses the reaction a (3Z)-enoyl-CoA = a 4-saturated (2E)-enoyl-CoA. The catalysed reaction is a (3E)-enoyl-CoA = a 4-saturated (2E)-enoyl-CoA. It functions in the pathway lipid metabolism; fatty acid beta-oxidation. Its function is as follows. Involved in the aerobic and anaerobic degradation of long-chain fatty acids via beta-oxidation cycle. Catalyzes the formation of 3-oxoacyl-CoA from enoyl-CoA via L-3-hydroxyacyl-CoA. It can also use D-3-hydroxyacyl-CoA and cis-3-enoyl-CoA as substrate. The chain is Fatty acid oxidation complex subunit alpha from Escherichia coli O139:H28 (strain E24377A / ETEC).